A 129-amino-acid chain; its full sequence is MAEEKWGIAHIFASFNNTIITVTDLSGAETVTKSSGGMVVKQDRNESSPYAAMQMAIQVAQNARDKGITGVHVKVRAPGRGKQRSPGPGAQAAIRALARAGMRIGRIEDVTPVPHDSIRGKGGRRGRRV.

Residues 107 to 129 (IEDVTPVPHDSIRGKGGRRGRRV) form a disordered region.

This sequence belongs to the universal ribosomal protein uS11 family. In terms of assembly, part of the 30S ribosomal subunit.

In terms of biological role, located on the platform of the 30S subunit. This is Small ribosomal subunit protein uS11 from Methanoculleus marisnigri (strain ATCC 35101 / DSM 1498 / JR1).